Reading from the N-terminus, the 141-residue chain is Large ribosomal subunit protein uL11 (141 aa).

Belongs to the universal ribosomal protein uL11 family. As to quaternary structure, part of the ribosomal stalk of the 50S ribosomal subunit. Interacts with L10 and the large rRNA to form the base of the stalk. L10 forms an elongated spine to which L12 dimers bind in a sequential fashion forming a multimeric L10(L12)X complex. Post-translationally, one or more lysine residues are methylated.

Its function is as follows. Forms part of the ribosomal stalk which helps the ribosome interact with GTP-bound translation factors. The sequence is that of Large ribosomal subunit protein uL11 from Nostoc sp. (strain PCC 7120 / SAG 25.82 / UTEX 2576).